A 476-amino-acid polypeptide reads, in one-letter code: MKTYLVRYSEIGLKGDRERARMERILADNIINYYKKIGYEARCQLLAGRLLVEAENDIPLSKVFGIKSYSECIRIKFENQEDIVKKVHALYEEKVKGKTFGVRCRRTGTHSFTSIDMEKAIGDALYSISNGVDLKSPEVWIHVDIVGKDALIYDKIYKGPGGLPLGSEGKLISMVSGGIDSPVATWLMMKRGSPCDIFFCSLADPIDTQAFLEIAKKLVERWSPYRDGNVFIADCRDLIRDMVIEKKTNFNNVTFKKVLYRLAERLAEKYRYLGIVTGESLGQVSSQTAENLLSIEHGINFPIYRPLIGLDKDEITAIARDIGTFPEKNVGEFCSLFSAHPVTRSKWEDIEEDVKKIDIEKFIERVTAIKFSEIGKIVINSDLMLNKNLEDAVFIDLRKKDLYEKSHYQGARHLDLEQALAINDTSKKYVFYCSMGLQSAYVASVLRERGIEAYFTTFSKLSKQKGSVDETIGKRV.

The THUMP domain maps to A54 to I156. ATP is bound by residues M174–V175, K256, G278, and Q287. A disulfide bond links C334 and C433. Residues N388–E470 enclose the Rhodanese domain. C433 acts as the Cysteine persulfide intermediate in catalysis.

This sequence belongs to the ThiI family.

The protein resides in the cytoplasm. The enzyme catalyses [ThiI sulfur-carrier protein]-S-sulfanyl-L-cysteine + a uridine in tRNA + 2 reduced [2Fe-2S]-[ferredoxin] + ATP + H(+) = [ThiI sulfur-carrier protein]-L-cysteine + a 4-thiouridine in tRNA + 2 oxidized [2Fe-2S]-[ferredoxin] + AMP + diphosphate. The catalysed reaction is [ThiS sulfur-carrier protein]-C-terminal Gly-Gly-AMP + S-sulfanyl-L-cysteinyl-[cysteine desulfurase] + AH2 = [ThiS sulfur-carrier protein]-C-terminal-Gly-aminoethanethioate + L-cysteinyl-[cysteine desulfurase] + A + AMP + 2 H(+). Its pathway is cofactor biosynthesis; thiamine diphosphate biosynthesis. Catalyzes the ATP-dependent transfer of a sulfur to tRNA to produce 4-thiouridine in position 8 of tRNAs, which functions as a near-UV photosensor. Also catalyzes the transfer of sulfur to the sulfur carrier protein ThiS, forming ThiS-thiocarboxylate. This is a step in the synthesis of thiazole, in the thiamine biosynthesis pathway. The sulfur is donated as persulfide by IscS. The polypeptide is tRNA sulfurtransferase (Thermoplasma volcanium (strain ATCC 51530 / DSM 4299 / JCM 9571 / NBRC 15438 / GSS1)).